Here is a 135-residue protein sequence, read N- to C-terminus: Large ribosomal subunit protein uL16c (135 aa).

Belongs to the universal ribosomal protein uL16 family. Part of the 50S ribosomal subunit.

Its subcellular location is the plastid. It is found in the chloroplast. This chain is Large ribosomal subunit protein uL16c, found in Euglena gracilis.